We begin with the raw amino-acid sequence, 417 residues long: S-adenosylmethionine synthase (417 aa).

Position 16 (histidine 16) interacts with ATP. Mg(2+) is bound at residue aspartate 18. Glutamate 44 contacts K(+). The L-methionine site is built by glutamate 57 and glutamine 100. Residues 100 to 110 are flexible loop; the sequence is QSPDIAQGVDT. ATP contacts are provided by residues 175–177, 251–252, aspartate 260, 266–267, alanine 283, and lysine 287; these read DGK, KF, and RK. Residue aspartate 260 coordinates L-methionine. Lysine 291 contacts L-methionine.

This sequence belongs to the AdoMet synthase family. As to quaternary structure, homotetramer; dimer of dimers. Mg(2+) serves as cofactor. K(+) is required as a cofactor.

It localises to the cytoplasm. The enzyme catalyses L-methionine + ATP + H2O = S-adenosyl-L-methionine + phosphate + diphosphate. The protein operates within amino-acid biosynthesis; S-adenosyl-L-methionine biosynthesis; S-adenosyl-L-methionine from L-methionine: step 1/1. Catalyzes the formation of S-adenosylmethionine (AdoMet) from methionine and ATP. The overall synthetic reaction is composed of two sequential steps, AdoMet formation and the subsequent tripolyphosphate hydrolysis which occurs prior to release of AdoMet from the enzyme. The polypeptide is S-adenosylmethionine synthase (Synechococcus elongatus (strain ATCC 33912 / PCC 7942 / FACHB-805) (Anacystis nidulans R2)).